A 115-amino-acid polypeptide reads, in one-letter code: Disintegrin EC6 subunit alpha (115 aa).

The signal sequence occupies residues 1-20 (MIQVLLVIICLAVFPYQGSS). Positions 21–47 (IILESGNINDYEIVYPKKVAVLPTGAM) are excised as a propeptide. One can recognise a Disintegrin domain in the interval 48–112 (NSVHPCCDPV…DCPRNRYKGK (65 aa)). 4 disulfide bridges follow: Cys53–Cys76, Cys67–Cys73, Cys72–Cys97, and Cys85–Cys104. The Cell attachment site; atypical (MLD) motif lies at 89–91 (MLD).

This sequence belongs to the disintegrin family. Dimeric disintegrin subfamily. Heterodimer with subunit beta; disulfide-linked. As to expression, expressed by the venom gland.

The protein resides in the secreted. In terms of biological role, potently inhibits adhesion of alpha-4/beta-1 (ITGA4/ITGB1) and alpha-9/beta-1 (ITGA9/ITGB1) integrins to VCAM1, and adhesion of alpha-5/beta-1 (ITGA5/ITGB1) integrin to fibronectin. Has a much less effect on alpha-IIb/beta-3 (ITGA2B/ITGB3) integrin. Also potently inhibits neutrophil migration across TNF-alpha-activated human umbilical endothelial cells. This Echis carinatus sochureki (Saw-scaled viper) protein is Disintegrin EC6 subunit alpha.